Reading from the N-terminus, the 305-residue chain is Acetaldehyde dehydrogenase (305 aa).

Catalysis depends on Cys-130, which acts as the Acyl-thioester intermediate. NAD(+) contacts are provided by residues 161-169 (SVGPGTRKN) and Asn-272.

The protein belongs to the acetaldehyde dehydrogenase family.

It catalyses the reaction acetaldehyde + NAD(+) + CoA = acetyl-CoA + NADH + H(+). The chain is Acetaldehyde dehydrogenase from Leptothrix cholodnii (strain ATCC 51168 / LMG 8142 / SP-6) (Leptothrix discophora (strain SP-6)).